The sequence spans 494 residues: Glutamyl-tRNA(Gln) amidotransferase subunit A (494 aa).

Active-site charge relay system residues include K80 and S160. Positions 140–168 (GNVISPWRRPGDTAPLAPGGSSGGSSSAV) are disordered. S184 acts as the Acyl-ester intermediate in catalysis.

Belongs to the amidase family. GatA subfamily. As to quaternary structure, heterotrimer of A, B and C subunits.

The enzyme catalyses L-glutamyl-tRNA(Gln) + L-glutamine + ATP + H2O = L-glutaminyl-tRNA(Gln) + L-glutamate + ADP + phosphate + H(+). Functionally, allows the formation of correctly charged Gln-tRNA(Gln) through the transamidation of misacylated Glu-tRNA(Gln) in organisms which lack glutaminyl-tRNA synthetase. The reaction takes place in the presence of glutamine and ATP through an activated gamma-phospho-Glu-tRNA(Gln). The polypeptide is Glutamyl-tRNA(Gln) amidotransferase subunit A (Novosphingobium aromaticivorans (strain ATCC 700278 / DSM 12444 / CCUG 56034 / CIP 105152 / NBRC 16084 / F199)).